A 284-amino-acid polypeptide reads, in one-letter code: Non-selective voltage-gated ion channel VDAC3 (284 aa).

At Cys2 the chain carries N-acetylcysteine. Thr4 is modified (phosphothreonine). An N6-acetyllysine mark is found at Lys12, Lys15, and Lys20. 2 beta stranded membrane-spanning segments follow: residues 26-35 and 39-48; these read MVKIDLKTKS and VMEFSTSGHA. Lys54 is covalently cross-linked (Glycyl lysine isopeptide (Lys-Gly) (interchain with G-Cter in ubiquitin)). 3 beta stranded membrane-spanning segments follow: residues 55–65, 70–77, and 81–90; these read ASGNLETKYKV, LTFTQKWN, and TLGTEISWEN. Lys91 is subject to N6-acetyllysine. Residues 96-105 form a beta stranded membrane-spanning segment; it reads LKLTLDTIFV. Glycyl lysine isopeptide (Lys-Gly) (interchain with G-Cter in ubiquitin) cross-links involve residues Lys110 and Lys111. The next 10 beta stranded transmembrane spans lie at 112 to 121, 124 to 131, 138 to 146, 151 to 159, 164 to 176, 179 to 186, 190 to 199, 203 to 212, 219 to 228, and 232 to 239; these read SGKLKASYKR, FSVGSNVD, TIYGWAVLA, LAGYQMSFD, KLSQNNFALGYKA, FQLHTHVN, EFGGSIYQKV, IETSINLAWT, RFGIAAKYML, and TSLSAKVN. At Ser242 the chain carries Phosphoserine. NAD(+) is bound by residues 243–245 and 261–265; these read LIG and SALID. Beta stranded transmembrane passes span 243-252 and 255-264; these read LIGLGYTQTL and GVKLTLSALI. An N6-acetyllysine; alternate modification is found at Lys267. A Glycyl lysine isopeptide (Lys-Gly) (interchain with G-Cter in ubiquitin); alternate cross-link involves residue Lys267. A beta stranded membrane pass occupies residues 274–283; that stretch reads HKVGLGFELE.

This sequence belongs to the eukaryotic mitochondrial porin family. As to quaternary structure, interacts with ARMC12 in a TBC1D21-dependent manner. Interacts with MISFA. In terms of processing, ubiquitinated by PRKN during mitophagy, leading to its degradation and enhancement of mitophagy. Deubiquitinated by USP30.

It is found in the mitochondrion outer membrane. The protein resides in the membrane. The catalysed reaction is chloride(in) = chloride(out). It catalyses the reaction K(+)(in) = K(+)(out). Its function is as follows. Non-selective voltage-gated ion channel that mediates the transport of anions and cations through the mitochondrion outer membrane and plasma membrane. Forms a high-conducting channel with a stable open state and a voltage-induced closure with a mild preference for anions over cations. Involved in male fertility and sperm mitochondrial sheath formation. In Pongo abelii (Sumatran orangutan), this protein is Non-selective voltage-gated ion channel VDAC3.